A 246-amino-acid chain; its full sequence is UDP-N-acetyl-D-mannosaminuronic acid transferase (246 aa).

It belongs to the glycosyltransferase 26 family.

It catalyses the reaction UDP-N-acetyl-alpha-D-mannosaminouronate + N-acetyl-alpha-D-glucosaminyl-di-trans,octa-cis-undecaprenyl diphosphate = beta-D-ManNAcA-(1-&gt;4)-alpha-D-GlcNAc-di-trans,octa-cis-undecaprenyl diphosphate + UDP + H(+). The protein operates within bacterial outer membrane biogenesis; enterobacterial common antigen biosynthesis. Catalyzes the synthesis of Und-PP-GlcNAc-ManNAcA (Lipid II), the second lipid-linked intermediate involved in enterobacterial common antigen (ECA) synthesis. The protein is UDP-N-acetyl-D-mannosaminuronic acid transferase of Serratia proteamaculans (strain 568).